The chain runs to 105 residues: UPF0145 protein Ping_0381 (105 aa).

Belongs to the UPF0145 family.

In Psychromonas ingrahamii (strain DSM 17664 / CCUG 51855 / 37), this protein is UPF0145 protein Ping_0381.